Reading from the N-terminus, the 381-residue chain is Acetyl-CoA:oxalate CoA-transferase (381 aa).

The active site involves His233.

The protein belongs to the CoA-transferase III family. In terms of assembly, homodimer.

It carries out the reaction oxalate + acetyl-CoA = oxalyl-CoA + acetate. Its function is as follows. Involved in the catabolism of oxalate and in the adapatation to low pH. ACOCT serves to prime the oxalate-induced acid tolerance response (ATR) cycle by producing substrate for oxalyl-CoA decarboxylase (OXC) and formyl-coenzyme A transferase (FCOCT). Catalyzes the reversible conversion of acetyl-CoA and oxalate to oxalyl-CoA and acetate. It can also use formyl-CoA and oxalate to produce oxalyl-CoA and formate with significantly reduced specific activity. The chain is Acetyl-CoA:oxalate CoA-transferase (yfdE) from Escherichia coli (strain K12).